The sequence spans 715 residues: MSMFNKVVKEFQWGQHKVRLETGEVARQASGAVIVDVEDTVVLATVVGAKSAKPGQDFFPLTVDYLEKTYSAGKIPGGFFRREGRPSEHETLTSRLIDRPLRPLFPEGFYNEVQVVIHVLSVNPEIPADIPALIGASAALAVSGLPFNGPVGAARVAYIDNAYVLNPTRDQLKASSLDLVVAGTERAVLMVESEADQLSEEVMLGAVVFGHEQMQIAIDAIHELVRDGGKPEWDWQPAPKNEALIARVTELAQNDLLAAYQLRDKQARSAKLKEVYAATSAKLEEDALAAGTVAADKATVGNVLFDIEAKIVRSQILNGEPRIDGRDTRTVRPIEIRTGVLPRTHGSALFTRGETQALVVATLGTKGDEQIIDALEGEYRERFMLHYNMPPFATGETGRVGSPKRREIGHGRLAKRALVKCLPSADEFGYSIRVVSEITESNGSSSMASVCGGCLALMDAGVPMKAHVAGIAMGLILEGNKFAVLTDILGDEDHLGDMDFKVAGTEQGVTALQMDIKIQGITKEIMQVALAQAKEGRLHILGKMTSAVSGANTQLSEFAPRMITVKINPEKIRDVIGKGGSVIRALTEETGTTIDISDDGVVTIASTSSEGMAEAKKRIEQITAEIEVGQVYEGTVLKLLDFGAIVNLLPGKDGLLHISEIVNERVKDINDYLKEGQQVKVKVIQTDEKGRVRLSAKALLNEAAAAAQSDTPPQQ.

The Mg(2+) site is built by aspartate 493 and aspartate 499. The KH domain maps to 560 to 619 (PRMITVKINPEKIRDVIGKGGSVIRALTEETGTTIDISDDGVVTIASTSSEGMAEAKKRI). Positions 629-697 (GQVYEGTVLK…EKGRVRLSAK (69 aa)) constitute an S1 motif domain.

It belongs to the polyribonucleotide nucleotidyltransferase family. Requires Mg(2+) as cofactor.

It localises to the cytoplasm. The catalysed reaction is RNA(n+1) + phosphate = RNA(n) + a ribonucleoside 5'-diphosphate. Its function is as follows. Involved in mRNA degradation. Catalyzes the phosphorolysis of single-stranded polyribonucleotides processively in the 3'- to 5'-direction. The protein is Polyribonucleotide nucleotidyltransferase of Burkholderia cenocepacia (strain HI2424).